The primary structure comprises 1085 residues: Tudor domain-containing protein 7B (1085 aa).

One can recognise an HTH OST-type 1 domain in the interval 3-76; the sequence is DEELVKKMVR…SGEVMCHATT (74 aa). Disordered regions lie at residues 112 to 183, 200 to 228, and 297 to 341; these read APLV…PEKR, RNPQ…SAPY, and PAKE…KALS. Over residues 203-216 the composition is skewed to polar residues; the sequence is QHINVPSNLNENTT. An HTH OST-type 2 domain is found at 229 to 299; it reads SPKLVQSRLQ…PQELLLYPAK (71 aa). Residues 322 to 335 are compositionally biased toward polar residues; sequence TQRPSLTAKSNTPE. Residues 340–410 enclose the HTH OST-type 3 domain; it reads LSPDLKQKLG…PKRAILYAKV (71 aa). Tudor domains follow at residues 496–554 and 686–743; these read SPSP…FYRL and RPFC…LLRD. Positions 843-853 are enriched in polar residues; it reads NVPTATQTSSL. Positions 843–888 are disordered; sequence NVPTATQTSSLKTDRGDKALHTPKKTSPPLGSKSTPAGSPPERLSL.

The protein localises to the cytoplasm. Component of specific cytoplasmic RNA granules involved in post-transcriptional regulation of specific genes: probably acts by binding to specific mRNAs and regulating their translation. Probably required during spermatogenesis. The chain is Tudor domain-containing protein 7B (tdrd7b) from Danio rerio (Zebrafish).